Here is a 554-residue protein sequence, read N- to C-terminus: Probable pectinesterase/pectinesterase inhibitor 6 (554 aa).

The signal sequence occupies residues 1–32 (MDHKILLTPPKSLYTKCIITIIYVVSISHLNA). The segment at 29-183 (HLNAHFITSC…TKSISNSLAV (155 aa)) is pectinesterase inhibitor 6. N-linked (GlcNAc...) asparagine glycans are attached at residues N119 and N172. Residues 250–540 (DLVVAKDGSG…FTVENFLDGN (291 aa)) are pectinesterase 6. Substrate-binding residues include T327 and Q357. The active-site Proton donor; for pectinesterase activity is the D380. Cysteines 394 and 414 form a disulfide. D401 (nucleophile; for pectinesterase activity) is an active-site residue. Residues R460 and W462 each contribute to the substrate site.

This sequence in the N-terminal section; belongs to the PMEI family. In the C-terminal section; belongs to the pectinesterase family. Expressed in rosette leaves, flower and siliques.

The protein resides in the secreted. It localises to the cell wall. It carries out the reaction [(1-&gt;4)-alpha-D-galacturonosyl methyl ester](n) + n H2O = [(1-&gt;4)-alpha-D-galacturonosyl](n) + n methanol + n H(+). It participates in glycan metabolism; pectin degradation; 2-dehydro-3-deoxy-D-gluconate from pectin: step 1/5. Functionally, acts in the modification of cell walls via demethylesterification of cell wall pectin. The chain is Probable pectinesterase/pectinesterase inhibitor 6 (PME6) from Arabidopsis thaliana (Mouse-ear cress).